A 306-amino-acid polypeptide reads, in one-letter code: Recombination-associated protein RdgC (306 aa).

Belongs to the RdgC family.

The protein resides in the cytoplasm. The protein localises to the nucleoid. Functionally, may be involved in recombination. The polypeptide is Recombination-associated protein RdgC (Pseudomonas fluorescens (strain Pf0-1)).